A 330-amino-acid polypeptide reads, in one-letter code: Elongation factor Ts, mitochondrial (330 aa).

The N-terminal 16 residues, 1–16 (MYRNCRKAFTFSLRHY), are a transit peptide targeting the mitochondrion.

The protein belongs to the EF-Ts family.

It is found in the mitochondrion. Its function is as follows. Associates with the EF-Tu.GDP complex and induces the exchange of GDP to GTP. It remains bound to the aminoacyl-tRNA.EF-Tu.GTP complex up to the GTP hydrolysis stage on the ribosome. The polypeptide is Elongation factor Ts, mitochondrial (Laccaria bicolor (strain S238N-H82 / ATCC MYA-4686) (Bicoloured deceiver)).